A 299-amino-acid polypeptide reads, in one-letter code: uncharacterized protein (299 aa).

Residues methionine 1–valine 38 form a disordered region.

The protein belongs to the calycin superfamily. Fatty-acid binding protein (FABP) family.

This is an uncharacterized protein from Caenorhabditis elegans.